Reading from the N-terminus, the 360-residue chain is Phospho-N-acetylmuramoyl-pentapeptide-transferase (360 aa).

The next 10 helical transmembrane spans lie at 27 to 47 (IVSLLTALVISLWMGPHMIAW), 73 to 93 (TMGGVMILVAIIVSVLMWANL), 94 to 114 (SNPYVWCVLLVLAGYGAVGFV), 132 to 152 (WKYFWQSVIALVVAFSMYAIG), 168 to 188 (VMPQLGLLYVALAYFVIVGTS), 199 to 219 (GLAIMPTVFVAAGFALVAWAT), 236 to 256 (ASELVIVCTAIVGAGLGFLWF), 263 to 283 (VFMGDVGSLALGGALGTIAVL), 288 to 308 (FLLVIMGGVFVVETLSVILQV), and 338 to 358 (VIVRFWIISLMLVLIGLATLK).

The protein belongs to the glycosyltransferase 4 family. MraY subfamily. Requires Mg(2+) as cofactor.

The protein localises to the cell inner membrane. The catalysed reaction is UDP-N-acetyl-alpha-D-muramoyl-L-alanyl-gamma-D-glutamyl-meso-2,6-diaminopimeloyl-D-alanyl-D-alanine + di-trans,octa-cis-undecaprenyl phosphate = di-trans,octa-cis-undecaprenyl diphospho-N-acetyl-alpha-D-muramoyl-L-alanyl-D-glutamyl-meso-2,6-diaminopimeloyl-D-alanyl-D-alanine + UMP. It participates in cell wall biogenesis; peptidoglycan biosynthesis. Its function is as follows. Catalyzes the initial step of the lipid cycle reactions in the biosynthesis of the cell wall peptidoglycan: transfers peptidoglycan precursor phospho-MurNAc-pentapeptide from UDP-MurNAc-pentapeptide onto the lipid carrier undecaprenyl phosphate, yielding undecaprenyl-pyrophosphoryl-MurNAc-pentapeptide, known as lipid I. In Pectobacterium carotovorum subsp. carotovorum (strain PC1), this protein is Phospho-N-acetylmuramoyl-pentapeptide-transferase.